Reading from the N-terminus, the 425-residue chain is Adenosylhomocysteinase (425 aa).

3 residues coordinate substrate: T60, D132, and E157. 158 to 160 (TTT) provides a ligand contact to NAD(+). Substrate contacts are provided by K187 and D191. Residues N192, 221-226 (GYGWCG), E244, N279, 300-302 (SGH), and N347 contribute to the NAD(+) site.

Belongs to the adenosylhomocysteinase family. NAD(+) serves as cofactor.

It is found in the cytoplasm. The enzyme catalyses S-adenosyl-L-homocysteine + H2O = L-homocysteine + adenosine. It participates in amino-acid biosynthesis; L-homocysteine biosynthesis; L-homocysteine from S-adenosyl-L-homocysteine: step 1/1. May play a key role in the regulation of the intracellular concentration of adenosylhomocysteine. The protein is Adenosylhomocysteinase of Synechocystis sp. (strain ATCC 27184 / PCC 6803 / Kazusa).